Consider the following 285-residue polypeptide: Ribosomal protein L11 methyltransferase (285 aa).

Residues Thr131, Gly154, Asp176, and Asn223 each coordinate S-adenosyl-L-methionine.

Belongs to the methyltransferase superfamily. PrmA family.

The protein localises to the cytoplasm. The enzyme catalyses L-lysyl-[protein] + 3 S-adenosyl-L-methionine = N(6),N(6),N(6)-trimethyl-L-lysyl-[protein] + 3 S-adenosyl-L-homocysteine + 3 H(+). Methylates ribosomal protein L11. This is Ribosomal protein L11 methyltransferase from Brucella melitensis biotype 2 (strain ATCC 23457).